Here is a 410-residue protein sequence, read N- to C-terminus: Proteasome-activating nucleotidase (410 aa).

Residues 1–70 (MENNSQNVLK…LRGEIERFRT (70 aa)) adopt a coiled-coil conformation. Residues 195–200 (GTGKTL) and histidine 334 each bind ATP. The tract at residues 408–410 (MFG) is docks into pockets in the proteasome alpha-ring to cause gate opening.

Belongs to the AAA ATPase family. Homohexamer. The hexameric complex has a two-ring architecture resembling a top hat that caps the 20S proteasome core at one or both ends. Upon ATP-binding, the C-terminus of PAN interacts with the alpha-rings of the proteasome core by binding to the intersubunit pockets.

The protein localises to the cytoplasm. Functionally, ATPase which is responsible for recognizing, binding, unfolding and translocation of substrate proteins into the archaeal 20S proteasome core particle. Is essential for opening the gate of the 20S proteasome via an interaction with its C-terminus, thereby allowing substrate entry and access to the site of proteolysis. Thus, the C-termini of the proteasomal ATPase function like a 'key in a lock' to induce gate opening and therefore regulate proteolysis. Unfolding activity requires energy from ATP hydrolysis, whereas ATP binding alone promotes ATPase-20S proteasome association which triggers gate opening, and supports translocation of unfolded substrates. The sequence is that of Proteasome-activating nucleotidase from Methanothermobacter thermautotrophicus (strain ATCC 29096 / DSM 1053 / JCM 10044 / NBRC 100330 / Delta H) (Methanobacterium thermoautotrophicum).